The chain runs to 221 residues: Protein N-terminal glutamine amidohydrolase (221 aa).

Ser2 is subject to N-acetylserine. Catalysis depends on residues Cys23, His79, and Asp97.

Belongs to the NTAQ1 family. As to quaternary structure, monomer.

It carries out the reaction N-terminal L-glutaminyl-[protein] + H2O = N-terminal L-glutamyl-[protein] + NH4(+). Functionally, mediates the side-chain deamidation of N-terminal glutamine residues to glutamate, an important step in N-end rule pathway of protein degradation. Conversion of the resulting N-terminal glutamine to glutamate renders the protein susceptible to arginylation, polyubiquitination and degradation as specified by the N-end rule. Does not act on substrates with internal or C-terminal glutamine and does not act on non-glutamine residues in any position. Involved in immune response. Controls the expression of specific defense-response genes, activates the synthesis pathway for the phytoalexin camalexin, and influences basal resistance to the hemibiotroph pathogen Pseudomonas syringae pv tomato (Pst). In Arabidopsis thaliana (Mouse-ear cress), this protein is Protein N-terminal glutamine amidohydrolase.